We begin with the raw amino-acid sequence, 182 residues long: MQLNIPTWLTLFRVVMIPFFVLAFYLPFKWAPLCCALIFVLAAVTDWFDGFLARRWKQTTRFGAFLDPVADKVMVAMALVLVAEHFHSWWITLPAATMIAREIIISALREWMAEIGKRSSVAVSWIGKVKTTAQMLALVTLLWRPDDIVSGIGIAALYVAAVLTFWSMFQYLYAARHDLFEH.

Residues 1–12 (MQLNIPTWLTLF) lie on the Cytoplasmic side of the membrane. A helical transmembrane segment spans residues 13 to 37 (RVVMIPFFVLAFYLPFKWAPLCCAL). The Periplasmic segment spans residues 38 to 60 (IFVLAAVTDWFDGFLARRWKQTT). A helical transmembrane segment spans residues 61 to 81 (RFGAFLDPVADKVMVAMALVL). The Cytoplasmic segment spans residues 82–86 (VAEHF). Residues 87–107 (HSWWITLPAATMIAREIIISA) form a helical membrane-spanning segment. At 108-145 (LREWMAEIGKRSSVAVSWIGKVKTTAQMLALVTLLWRP) the chain is on the periplasmic side. Residues 146–168 (DDIVSGIGIAALYVAAVLTFWSM) form a helical membrane-spanning segment. Over 169–181 (FQYLYAARHDLFE) the chain is Cytoplasmic.

It belongs to the CDP-alcohol phosphatidyltransferase class-I family.

Its subcellular location is the cell inner membrane. The catalysed reaction is a CDP-1,2-diacyl-sn-glycerol + sn-glycerol 3-phosphate = a 1,2-diacyl-sn-glycero-3-phospho-(1'-sn-glycero-3'-phosphate) + CMP + H(+). It functions in the pathway phospholipid metabolism; phosphatidylglycerol biosynthesis; phosphatidylglycerol from CDP-diacylglycerol: step 1/2. Its function is as follows. Catalyzes the conversion of cytidine diphosphate diacylglycerol (CDP-DG) and glycerol 3-phosphate into phosphatidylglycerol. Essential for the synthesis of anionic phospholipids, thereby playing a role in balancing the ratio of zwitterionic and anionic phospholipids, which is thought to be important for normal membrane function. This is CDP-diacylglycerol--glycerol-3-phosphate 3-phosphatidyltransferase from Sodalis glossinidius (strain morsitans).